We begin with the raw amino-acid sequence, 331 residues long: Glyceraldehyde-3-phosphate dehydrogenase, cytosolic (331 aa).

NAD(+) is bound by residues 12–13, D34, and R78; that span reads RI. D-glyceraldehyde 3-phosphate is bound by residues 149–151, T180, 209–210, and R232; these read SCT and TG. The active-site Nucleophile is the C150. N314 contributes to the NAD(+) binding site.

This sequence belongs to the glyceraldehyde-3-phosphate dehydrogenase family. In terms of assembly, homotetramer.

Its subcellular location is the cytoplasm. It catalyses the reaction D-glyceraldehyde 3-phosphate + phosphate + NAD(+) = (2R)-3-phospho-glyceroyl phosphate + NADH + H(+). It participates in carbohydrate degradation; glycolysis; pyruvate from D-glyceraldehyde 3-phosphate: step 1/5. The sequence is that of Glyceraldehyde-3-phosphate dehydrogenase, cytosolic from Trypanosoma brucei brucei.